The sequence spans 130 residues: VQPSLGKESAAMKFERQHMDSTVATSSSPTYCNQMMKRRNMTQGQCKPVNTFVHESLADVHAVCSQENVKCKNGKSNCYKSHSALHITDCRLKGNAKYPNCDYQTSQHQKHIIVACEGNPFVPVHFDATV.

The signal sequence occupies residues 1-6 (VQPSLG). Residues lysine 13 and arginine 16 each coordinate substrate. The active-site Proton acceptor is the histidine 18. 4 cysteine pairs are disulfide-bonded: cysteine 32–cysteine 90, cysteine 46–cysteine 101, cysteine 64–cysteine 116, and cysteine 71–cysteine 78. N-linked (GlcNAc...) asparagine glycosylation occurs at asparagine 40. Residues 47–51 (KPVNT), lysine 72, and arginine 91 contribute to the substrate site. The active-site Proton donor is the histidine 125.

This sequence belongs to the pancreatic ribonuclease family. As to quaternary structure, monomer. Interacts with and forms tight 1:1 complexes with RNH1. Dimerization of two such complexes may occur. Interaction with RNH1 inhibits this protein. As to expression, pancreas.

Its subcellular location is the secreted. The catalysed reaction is an [RNA] containing cytidine + H2O = an [RNA]-3'-cytidine-3'-phosphate + a 5'-hydroxy-ribonucleotide-3'-[RNA].. The enzyme catalyses an [RNA] containing uridine + H2O = an [RNA]-3'-uridine-3'-phosphate + a 5'-hydroxy-ribonucleotide-3'-[RNA].. Functionally, endonuclease that catalyzes the cleavage of RNA on the 3' side of pyrimidine nucleotides. Acts on single-stranded and double-stranded RNA. The chain is Ribonuclease pancreatic (RNASE1) from Cricetulus griseus (Chinese hamster).